The chain runs to 72 residues: MIIPWQELEEETLNNIVESFILREGTDYGQCELSLEQKKQALLSQIQQGTVVIVWSELHESIDIKDKMDLLK.

The protein belongs to the UPF0270 family.

This chain is UPF0270 protein PM1156, found in Pasteurella multocida (strain Pm70).